Reading from the N-terminus, the 279-residue chain is Protein phosphatase 1 regulatory subunit 3E (279 aa).

Phosphoserine is present on residues Ser-16 and Ser-33. Residues 28 to 86 (RSQRPSLEEEPEEEPGEGGTRFGARSRAHAPSRGRRARSAPAGGGGARAPRSRSPDTRK) form a disordered region. The span at 51 to 65 (ARSRAHAPSRGRRAR) shows a compositional bias: basic residues. Ser-66 carries the phosphoserine modification. The short motif at 87-90 (RVRF) is the PP1-binding motif element. Positions 154 to 259 (AARLLTQRIC…NNGGRDYALR (106 aa)) constitute a CBM21 domain. A glycogen-binding motif region spans residues 176–198 (GSARVVDLAYEKRVSVRWSADGW). The tract at residues 248 to 256 (WDNNGGRDY) is substrate-binding motif.

In terms of tissue distribution, expressed in skeletal muscle and heart with barely detectable levels in liver.

Acts as a glycogen-targeting subunit for PP1. PP1 is involved in glycogen metabolism and contributes to the activation of glycogen synthase leading to an increase in glycogen synthesis. This is Protein phosphatase 1 regulatory subunit 3E (PPP1R3E) from Homo sapiens (Human).